The sequence spans 298 residues: ATP synthase gamma chain (298 aa).

This sequence belongs to the ATPase gamma chain family. In terms of assembly, F-type ATPases have 2 components, CF(1) - the catalytic core - and CF(0) - the membrane proton channel. CF(1) has five subunits: alpha(3), beta(3), gamma(1), delta(1), epsilon(1). CF(0) has three main subunits: a, b and c.

It localises to the cell inner membrane. In terms of biological role, produces ATP from ADP in the presence of a proton gradient across the membrane. The gamma chain is believed to be important in regulating ATPase activity and the flow of protons through the CF(0) complex. This chain is ATP synthase gamma chain, found in Granulibacter bethesdensis (strain ATCC BAA-1260 / CGDNIH1).